The chain runs to 466 residues: Soluble pyridine nucleotide transhydrogenase (466 aa).

An FAD-binding site is contributed by 36-45 (ERYQNVGGGC).

It belongs to the class-I pyridine nucleotide-disulfide oxidoreductase family. The cofactor is FAD.

It is found in the cytoplasm. It catalyses the reaction NAD(+) + NADPH = NADH + NADP(+). Conversion of NADPH, generated by peripheral catabolic pathways, to NADH, which can enter the respiratory chain for energy generation. The sequence is that of Soluble pyridine nucleotide transhydrogenase from Shigella boydii serotype 18 (strain CDC 3083-94 / BS512).